The sequence spans 361 residues: Phospho-N-acetylmuramoyl-pentapeptide-transferase (361 aa).

A run of 10 helical transmembrane segments spans residues 25–45 (RGIL…PAVI), 73–93 (TMGG…WGDL), 98–118 (VWLV…DDWI), 139–159 (IFGL…AAIT), 168–188 (IALP…IVGF), 200–220 (GLAI…AYAS), 237–257 (AGEL…FLWF), 264–284 (VFMG…IAVI), 290–310 (VLVI…IQVV), and 339–359 (VIVR…ATLK).

It belongs to the glycosyltransferase 4 family. MraY subfamily. The cofactor is Mg(2+).

It is found in the cell inner membrane. It catalyses the reaction UDP-N-acetyl-alpha-D-muramoyl-L-alanyl-gamma-D-glutamyl-meso-2,6-diaminopimeloyl-D-alanyl-D-alanine + di-trans,octa-cis-undecaprenyl phosphate = di-trans,octa-cis-undecaprenyl diphospho-N-acetyl-alpha-D-muramoyl-L-alanyl-D-glutamyl-meso-2,6-diaminopimeloyl-D-alanyl-D-alanine + UMP. It participates in cell wall biogenesis; peptidoglycan biosynthesis. Catalyzes the initial step of the lipid cycle reactions in the biosynthesis of the cell wall peptidoglycan: transfers peptidoglycan precursor phospho-MurNAc-pentapeptide from UDP-MurNAc-pentapeptide onto the lipid carrier undecaprenyl phosphate, yielding undecaprenyl-pyrophosphoryl-MurNAc-pentapeptide, known as lipid I. The sequence is that of Phospho-N-acetylmuramoyl-pentapeptide-transferase from Xanthomonas euvesicatoria pv. vesicatoria (strain 85-10) (Xanthomonas campestris pv. vesicatoria).